Consider the following 115-residue polypeptide: Large ribosomal subunit protein uL24 (115 aa).

The protein belongs to the universal ribosomal protein uL24 family. Part of the 50S ribosomal subunit.

One of two assembly initiator proteins, it binds directly to the 5'-end of the 23S rRNA, where it nucleates assembly of the 50S subunit. Its function is as follows. One of the proteins that surrounds the polypeptide exit tunnel on the outside of the subunit. This chain is Large ribosomal subunit protein uL24, found in Amoebophilus asiaticus (strain 5a2).